Reading from the N-terminus, the 318-residue chain is Beta-ketoacyl-[acyl-carrier-protein] synthase III (318 aa).

Catalysis depends on residues cysteine 112 and histidine 245. The segment at 246 to 250 (QANLR) is ACP-binding. The active site involves asparagine 275.

Belongs to the thiolase-like superfamily. FabH family. As to quaternary structure, homodimer.

The protein resides in the cytoplasm. It catalyses the reaction malonyl-[ACP] + acetyl-CoA + H(+) = 3-oxobutanoyl-[ACP] + CO2 + CoA. It functions in the pathway lipid metabolism; fatty acid biosynthesis. Catalyzes the condensation reaction of fatty acid synthesis by the addition to an acyl acceptor of two carbons from malonyl-ACP. Catalyzes the first condensation reaction which initiates fatty acid synthesis and may therefore play a role in governing the total rate of fatty acid production. Possesses both acetoacetyl-ACP synthase and acetyl transacylase activities. Its substrate specificity determines the biosynthesis of branched-chain and/or straight-chain of fatty acids. The chain is Beta-ketoacyl-[acyl-carrier-protein] synthase III from Blochmanniella floridana.